A 341-amino-acid polypeptide reads, in one-letter code: Ribosomal RNA small subunit methyltransferase C (341 aa).

Belongs to the methyltransferase superfamily. RsmC family. Monomer.

The protein resides in the cytoplasm. The catalysed reaction is guanosine(1207) in 16S rRNA + S-adenosyl-L-methionine = N(2)-methylguanosine(1207) in 16S rRNA + S-adenosyl-L-homocysteine + H(+). Functionally, specifically methylates the guanine in position 1207 of 16S rRNA in the 30S particle. In Shewanella amazonensis (strain ATCC BAA-1098 / SB2B), this protein is Ribosomal RNA small subunit methyltransferase C.